The primary structure comprises 588 residues: Adenine deaminase (588 aa).

It belongs to the metallo-dependent hydrolases superfamily. Adenine deaminase family. As to quaternary structure, homodimer. Requires Mn(2+) as cofactor.

It carries out the reaction adenine + H2O + H(+) = hypoxanthine + NH4(+). The protein is Adenine deaminase of Shigella flexneri serotype 5b (strain 8401).